The primary structure comprises 184 residues: Non-specific lipid transfer protein GPI-anchored 6 (184 aa).

The first 24 residues, 1 to 24 (MEKSTRTLFITIVITSMLLGFGNS), serve as a signal peptide directing secretion. 4 disulfide bridges follow: Cys33–Cys74, Cys43–Cys58, Cys59–Cys101, and Cys72–Cys111. Positions 138-158 (NSTSPTQIHKDGTGGGKAEPV) are disordered. Ser160 is lipidated: GPI-anchor amidated serine. A propeptide spans 161–184 (NGWKEKSWLGVELLIYLLVSLIFF) (removed in mature form).

Belongs to the plant LTP family. Preferentially expressed in the shoot apical meristem and the root meristem. Also present in the ovules and developing embryos. Observed in cotyledons, hypocotyls, flowers, leaves and siliques. Up-regulated in the epidermis of stems.

The protein resides in the cell membrane. In terms of biological role, lipid transfer protein involved in seed and ovule maturation and development, probably by regulating the fatty acids homeostasis during suberin and sporopollenin biosynthesis or deposition. Contributes to pre-invasive defense against some non-host powdery mildew pathogens by preventing the penetration of the epidermal cell wall by the fungal agents (e.g. Blumeria graminis f. sp. hordei (Bgh)). The polypeptide is Non-specific lipid transfer protein GPI-anchored 6 (Arabidopsis thaliana (Mouse-ear cress)).